Here is a 194-residue protein sequence, read N- to C-terminus: Fe/S biogenesis protein NfuA (194 aa).

Residues Cys151 and Cys154 each contribute to the [4Fe-4S] cluster site.

The protein belongs to the NfuA family. Homodimer. The cofactor is [4Fe-4S] cluster.

Its function is as follows. Involved in iron-sulfur cluster biogenesis. Binds a 4Fe-4S cluster, can transfer this cluster to apoproteins, and thereby intervenes in the maturation of Fe/S proteins. Could also act as a scaffold/chaperone for damaged Fe/S proteins. The chain is Fe/S biogenesis protein NfuA from Aliivibrio salmonicida (strain LFI1238) (Vibrio salmonicida (strain LFI1238)).